Here is a 44-residue protein sequence, read N- to C-terminus: Protein PsbN (44 aa).

Residues 6 to 26 (FFFTIFVWFLLISVTGYSIYV) traverse the membrane as a helical segment.

It belongs to the PsbN family.

It is found in the plastid. Its subcellular location is the chloroplast thylakoid membrane. Functionally, may play a role in photosystem I and II biogenesis. The protein is Protein PsbN of Bigelowiella natans (Pedinomonas minutissima).